Consider the following 76-residue polypeptide: Antimicrobial peptide lumbricin-1 (76 aa).

Positions 1–14 are cleaved as a propeptide — removed in mature form; the sequence is MSLCISDYLYLTLT.

In terms of biological role, displays antimicrobial activity against the Gram-positive bacteria B.subtilis ATCC 62037, S.aureus ATCC 15752 and S.mutans ATCC 25175, the Gram-negative bacteria E.coli ATCC 27325, P.putida ATCC 17426 and Serratia sp. ATCC 21074, and the fungi C.albicans ATCC 10231, C.neoformans ATCC 34881 and S.cerevisiae ATCC 44774. Does not possess hemolytic activity. This is Antimicrobial peptide lumbricin-1 from Lumbricus rubellus (Humus earthworm).